The primary structure comprises 263 residues: MKGGFTGGDEYQKHFLPRDYLATYYSFDGSPSPEAEMLKFNLECLHKTFGPGGLQGDTLIDIGSGPTIYQVLAACDSFQDITLSDFTDRNREELEKWLKKEPGAYDWTPAVKFACELEGNSGRWEEKEEKLRAAVKRVLKCDVHLGNPLAPAVLPLADCVLTLLAMECACCSLDAYRAALCNLASLLKPGGHLVTTVTLRLPSYMVGKREFSCVALEKEEVEQAVLDAGFDIEQLLHSPQSYSVTNAANNGVCFIVARKKPGP.

The residue at position 13 (Lys13) is an N6-succinyllysine. S-adenosyl-L-methionine-binding positions include Tyr20, Tyr25, Gly63, Tyr69, 85-87 (DFT), and Asn90. Lys96 carries the N6-succinyllysine modification. S-adenosyl-L-methionine-binding positions include 142 to 143 (DV) and Leu163.

This sequence belongs to the class I-like SAM-binding methyltransferase superfamily. NNMT/PNMT/TEMT family. In terms of assembly, monomer. In terms of tissue distribution, widely expressed. The highest levels were in thyroid, adrenal gland, adult and fetal lung. Intermediate levels in heart, placenta, skeletal muscle, testis, small intestine, pancreas, stomach, spinal cord, lymph node and trachea. Very low levels in adult and fetal kidney and liver, in adult spleen, thymus, ovary, colon and bone marrow. Not expressed in peripheral blood leukocytes and brain.

Its subcellular location is the cytoplasm. The enzyme catalyses a tertiary amine + S-adenosyl-L-methionine = a methylated tertiary amine + S-adenosyl-L-homocysteine + H(+). It carries out the reaction a secondary amine + S-adenosyl-L-methionine = a methylated secondary amine + S-adenosyl-L-homocysteine + H(+). It catalyses the reaction a primary amine + S-adenosyl-L-methionine = a methylated primary amine + S-adenosyl-L-homocysteine + H(+). The catalysed reaction is dimethyl sulfide + S-adenosyl-L-methionine = trimethylsulfonium + S-adenosyl-L-homocysteine. Its function is as follows. Functions as a thioether S-methyltransferase and is active with a variety of thioethers and the corresponding selenium and tellurium compounds, including 3-methylthiopropionaldehyde, dimethyl selenide, dimethyl telluride, 2-methylthioethylamine, 2-methylthioethanol, methyl-n-propyl sulfide and diethyl sulfide. Plays an important role in the detoxification of selenium compounds. Catalyzes the N-methylation of tryptamine and structurally related compounds. This chain is Indolethylamine N-methyltransferase (INMT), found in Homo sapiens (Human).